The primary structure comprises 240 residues: Ribonuclease PH (240 aa).

Residues R87 and 125-127 contribute to the phosphate site; that span reads GTR.

It belongs to the RNase PH family. Homohexameric ring arranged as a trimer of dimers.

It carries out the reaction tRNA(n+1) + phosphate = tRNA(n) + a ribonucleoside 5'-diphosphate. Functionally, phosphorolytic 3'-5' exoribonuclease that plays an important role in tRNA 3'-end maturation. Removes nucleotide residues following the 3'-CCA terminus of tRNAs; can also add nucleotides to the ends of RNA molecules by using nucleoside diphosphates as substrates, but this may not be physiologically important. Probably plays a role in initiation of 16S rRNA degradation (leading to ribosome degradation) during starvation. The protein is Ribonuclease PH of Pseudomonas fluorescens (strain ATCC BAA-477 / NRRL B-23932 / Pf-5).